Consider the following 953-residue polypeptide: Coiled-coil domain-containing protein 14 (953 aa).

Residues 1–21 are compositionally biased toward basic residues; sequence MKRGIRRDPFRKRKLGGRAKK. 2 disordered regions span residues 1–22 and 52–72; these read MKRGIRRDPFRKRKLGGRAKKV and SGARPGQVLSSGRHTGPAKLT. Serine 124 carries the phosphoserine modification. 2 disordered regions span residues 126 to 189 and 268 to 287; these read SETA…TSDL and PPCPPKVHSEVQTDGNSQFA. Residues 145-154 show a composition bias toward basic residues; it reads YGSKKKRHEK. The segment covering 169–187 has biased composition (basic and acidic residues); that stretch reads DNKKQIPNEASARSERDTS. The segment covering 277 to 287 has biased composition (polar residues); it reads EVQTDGNSQFA. 2 coiled-coil regions span residues 383–413 and 483–618; these read LATNEEKCAREQIREATSERKDLNIHVRDTK and AMQP…AEKE. Serine 670, serine 754, and serine 798 each carry phosphoserine.

Interacts with CEP63.

It localises to the cytoplasm. Its subcellular location is the cytoskeleton. It is found in the microtubule organizing center. The protein resides in the centrosome. The protein localises to the centriolar satellite. In terms of biological role, negatively regulates centriole duplication. Negatively regulates CEP63 and CDK2 centrosomal localization. The polypeptide is Coiled-coil domain-containing protein 14 (CCDC14) (Homo sapiens (Human)).